The following is a 102-amino-acid chain: Putative sortase YwpE (102 aa).

Catalysis depends on His-17, which acts as the Proton donor/acceptor. Cys-78 functions as the Acyl-thioester intermediate in the catalytic mechanism.

It belongs to the bacterial sortase family.

Its function is as follows. Seems not to play a major role if any as a sortase. This Bacillus subtilis (strain 168) protein is Putative sortase YwpE (ywpE).